The following is a 319-amino-acid chain: tRNA-cytidine(32) 2-sulfurtransferase (319 aa).

The short motif at 43–48 (SGGKDS) is the PP-loop motif element. Cys-118, Cys-121, and Cys-209 together coordinate [4Fe-4S] cluster.

This sequence belongs to the TtcA family. In terms of assembly, homodimer. Mg(2+) is required as a cofactor. Requires [4Fe-4S] cluster as cofactor.

The protein localises to the cytoplasm. It carries out the reaction cytidine(32) in tRNA + S-sulfanyl-L-cysteinyl-[cysteine desulfurase] + AH2 + ATP = 2-thiocytidine(32) in tRNA + L-cysteinyl-[cysteine desulfurase] + A + AMP + diphosphate + H(+). Its pathway is tRNA modification. Catalyzes the ATP-dependent 2-thiolation of cytidine in position 32 of tRNA, to form 2-thiocytidine (s(2)C32). The sulfur atoms are provided by the cysteine/cysteine desulfurase (IscS) system. This is tRNA-cytidine(32) 2-sulfurtransferase from Neisseria meningitidis serogroup C (strain 053442).